A 316-amino-acid polypeptide reads, in one-letter code: Adenine deaminase (316 aa).

The Zn(2+) site is built by histidine 14, histidine 16, and histidine 194. Glutamate 197 serves as the catalytic Proton donor. Aspartate 275 is a binding site for Zn(2+). Aspartate 276 lines the substrate pocket.

This sequence belongs to the metallo-dependent hydrolases superfamily. Adenosine and AMP deaminases family. Adenine deaminase type 2 subfamily. It depends on Zn(2+) as a cofactor.

The enzyme catalyses adenine + H2O + H(+) = hypoxanthine + NH4(+). Its function is as follows. Catalyzes the hydrolytic deamination of adenine to hypoxanthine. Plays an important role in the purine salvage pathway and in nitrogen catabolism. This is Adenine deaminase from Pseudomonas paraeruginosa (strain DSM 24068 / PA7) (Pseudomonas aeruginosa (strain PA7)).